The following is a 228-amino-acid chain: NAD(P)H-hydrate epimerase (228 aa).

Residues 9–214 (AQNIDQELFN…DLLLKKYELE (206 aa)) enclose the YjeF N-terminal domain. 60-64 (NNGGD) serves as a coordination point for (6S)-NADPHX. K(+) is bound by residues Asn61 and Asp125. (6S)-NADPHX contacts are provided by residues 129 to 135 (GFSFKGE) and Asp158. Ser161 provides a ligand contact to K(+).

This sequence belongs to the NnrE/AIBP family. K(+) serves as cofactor.

It catalyses the reaction (6R)-NADHX = (6S)-NADHX. The catalysed reaction is (6R)-NADPHX = (6S)-NADPHX. Catalyzes the epimerization of the S- and R-forms of NAD(P)HX, a damaged form of NAD(P)H that is a result of enzymatic or heat-dependent hydration. This is a prerequisite for the S-specific NAD(P)H-hydrate dehydratase to allow the repair of both epimers of NAD(P)HX. This is NAD(P)H-hydrate epimerase from Nematostella vectensis (Starlet sea anemone).